We begin with the raw amino-acid sequence, 93 residues long: MANTKSAIKRIKISERNRIRNRVRLGKIKFYTKQFLKFLNENNIEEAKKILPEVISAIDKAAQKGTLHKNTAARKKSKLMKLLNQKLSANLSS.

This sequence belongs to the bacterial ribosomal protein bS20 family.

In terms of biological role, binds directly to 16S ribosomal RNA. The sequence is that of Small ribosomal subunit protein bS20 from Dictyoglomus turgidum (strain DSM 6724 / Z-1310).